The following is a 298-amino-acid chain: Isochorismatase domain-containing protein 1 (298 aa).

Tyr-160 is modified (phosphotyrosine). Lys-279 carries the N6-succinyllysine modification.

Belongs to the isochorismatase family.

This chain is Isochorismatase domain-containing protein 1 (ISOC1), found in Bos taurus (Bovine).